The sequence spans 224 residues: Ribosomal RNA small subunit methyltransferase I (224 aa).

It belongs to the methyltransferase superfamily. RsmI family.

It is found in the cytoplasm. The catalysed reaction is cytidine(1402) in 16S rRNA + S-adenosyl-L-methionine = 2'-O-methylcytidine(1402) in 16S rRNA + S-adenosyl-L-homocysteine + H(+). Its function is as follows. Catalyzes the 2'-O-methylation of the ribose of cytidine 1402 (C1402) in 16S rRNA. The chain is Ribosomal RNA small subunit methyltransferase I from Borrelia garinii subsp. bavariensis (strain ATCC BAA-2496 / DSM 23469 / PBi) (Borreliella bavariensis).